The sequence spans 159 residues: E3 ubiquitin ligase complex SCF subunit sconC (159 aa).

An interaction with the F-box domain of F-box proteins region spans residues isoleucine 101–glutamate 159.

The protein belongs to the SKP1 family. Component of the SCF (SKP1-CUL1-F-box protein) E3 ubiquitin ligase complexes.

It participates in protein modification; protein ubiquitination. Essential component of the SCF (SKP1-CUL1-F-box protein) E3 ubiquitin ligase complexes, which mediate the ubiquitination and subsequent proteasomal degradation of target proteins. Controls sulfur metabolite repression, probably by mediating the inactivation or degradation of the metR transcription factor. This chain is E3 ubiquitin ligase complex SCF subunit sconC (sconC), found in Aspergillus clavatus (strain ATCC 1007 / CBS 513.65 / DSM 816 / NCTC 3887 / NRRL 1 / QM 1276 / 107).